The chain runs to 148 residues: Deoxyuridine 5'-triphosphate nucleotidohydrolase (148 aa).

Belongs to the dUTPase family. The cofactor is Mg(2+).

The enzyme catalyses dUTP + H2O = dUMP + diphosphate + H(+). It participates in pyrimidine metabolism; dUMP biosynthesis; dUMP from dCTP (dUTP route): step 2/2. This enzyme decreases the intracellular concentration of dUTP so that uracil cannot be incorporated into viral progeny DNA. This activity is sufficient to exclude uracil from the DNA during phage replication. In the case of dUTPase mutant phages, the host dUTPase activity is not sufficient to exclude uracil from T5 DNA and uracil are incorporated, leading to decreased phage viability. This is Deoxyuridine 5'-triphosphate nucleotidohydrolase (DUT) from Escherichia coli (Enterobacteria phage T5).